The sequence spans 109 residues: Iron-sulfur cluster assembly protein CyaY (109 aa).

Belongs to the frataxin family.

Involved in iron-sulfur (Fe-S) cluster assembly. May act as a regulator of Fe-S biogenesis. This chain is Iron-sulfur cluster assembly protein CyaY, found in Shewanella sp. (strain ANA-3).